The primary structure comprises 938 residues: Isoleucine--tRNA ligase (938 aa).

The 'HIGH' region signature appears at 58–68 (PYANGSIHIGH). Glu-561 lines the L-isoleucyl-5'-AMP pocket. A 'KMSKS' region motif is present at residues 602–606 (KMSKS). Lys-605 contributes to the ATP binding site. Residues Cys-901, Cys-904, Cys-921, and Cys-924 each coordinate Zn(2+).

The protein belongs to the class-I aminoacyl-tRNA synthetase family. IleS type 1 subfamily. In terms of assembly, monomer. It depends on Zn(2+) as a cofactor.

It localises to the cytoplasm. The catalysed reaction is tRNA(Ile) + L-isoleucine + ATP = L-isoleucyl-tRNA(Ile) + AMP + diphosphate. Its function is as follows. Catalyzes the attachment of isoleucine to tRNA(Ile). As IleRS can inadvertently accommodate and process structurally similar amino acids such as valine, to avoid such errors it has two additional distinct tRNA(Ile)-dependent editing activities. One activity is designated as 'pretransfer' editing and involves the hydrolysis of activated Val-AMP. The other activity is designated 'posttransfer' editing and involves deacylation of mischarged Val-tRNA(Ile). The protein is Isoleucine--tRNA ligase of Baumannia cicadellinicola subsp. Homalodisca coagulata.